Here is a 130-residue protein sequence, read N- to C-terminus: Small ribosomal subunit protein uS9 (130 aa).

The segment at 109–130 (RAKERKKYGLYGARRSPQFTKR) is disordered.

The protein belongs to the universal ribosomal protein uS9 family.

This Malacoplasma penetrans (strain HF-2) (Mycoplasma penetrans) protein is Small ribosomal subunit protein uS9.